Here is a 250-residue protein sequence, read N- to C-terminus: DNA polymerase sliding clamp (250 aa).

The protein belongs to the PCNA family. In terms of assembly, homotrimer. The subunits circularize to form a toroid; DNA passes through its center. Replication factor C (RFC) is required to load the toroid on the DNA.

Its function is as follows. Sliding clamp subunit that acts as a moving platform for DNA processing. Responsible for tethering the catalytic subunit of DNA polymerase and other proteins to DNA during high-speed replication. The polypeptide is DNA polymerase sliding clamp (Methanococcus maripaludis (strain DSM 14266 / JCM 13030 / NBRC 101832 / S2 / LL)).